A 318-amino-acid polypeptide reads, in one-letter code: Non-homologous end joining protein Ku (318 aa).

One can recognise a Ku domain in the interval 10–193; that stretch reads AFGLVNVPVK…EVQIKPAELK (184 aa). The disordered stretch occupies residues 259–318; the sequence is SVKARKGGKSDSKDDSDSESDSKESKSDSKPAKKAPAKKAAAKKSTAKKAPAKKAAAKKS. The span at 266-289 shows a compositional bias: basic and acidic residues; that stretch reads GKSDSKDDSDSESDSKESKSDSKP. Positions 290-318 are enriched in basic residues; the sequence is AKKAPAKKAAAKKSTAKKAPAKKAAAKKS.

Belongs to the prokaryotic Ku family. Homodimer. Interacts with Sir2 and probably also with LigD; may form a trimeric complex during NHEJ.

In terms of biological role, with LigD forms a non-homologous end joining (NHEJ) repair enzyme which repairs blunt-end and 5'-overhang double strand breaks (DSB) with about 50% fidelity, and DSB with non-complementary 3' ends. Plays a partial role in NHEJ on 3'-overhang repair of complementary ends. NHEJ repairs DSB with blunt ends and 5' overhangs with a high level of nucleotide insertion/deletion, without a need for microhomology. This protein but not LigD also suppresses homologous recombination. Overexpression dramatically increases the efficiency of NHEJ with no effect on repair fidelity. The protein is Non-homologous end joining protein Ku of Mycolicibacterium smegmatis (strain ATCC 700084 / mc(2)155) (Mycobacterium smegmatis).